Reading from the N-terminus, the 212-residue chain is Large ribosomal subunit protein uL1 (212 aa).

This sequence belongs to the universal ribosomal protein uL1 family. Part of the 50S ribosomal subunit.

Functionally, binds directly to 23S rRNA. Probably involved in E site tRNA release. Protein L1 is also a translational repressor protein, it controls the translation of its operon by binding to its mRNA. The chain is Large ribosomal subunit protein uL1 from Natronomonas pharaonis (strain ATCC 35678 / DSM 2160 / CIP 103997 / JCM 8858 / NBRC 14720 / NCIMB 2260 / Gabara) (Halobacterium pharaonis).